Here is a 124-residue protein sequence, read N- to C-terminus: Ragulator complex protein LAMTOR2 homolog (124 aa).

The protein belongs to the GAMAD family. As to quaternary structure, part of the Ragulator complex.

Regulator of the TOR pathway, a signaling cascade that promotes cell growth in response to growth factors, energy levels, and amino acids. May activate the TOR signaling cascade in response to amino acids. The polypeptide is Ragulator complex protein LAMTOR2 homolog (Caenorhabditis elegans).